The primary structure comprises 526 residues: MSLNNIIKNALVSLSDKTDLLKISKILAEKKINLFCTGGTADVLKKNKIPVLEISDYTNFPEIMNGRLKTLHPKIIGGILGRREKDQKIMKLHNLIPIDIVIVNFYPFEKIQNRKEFTIEEIIDNIDIGGPTLVRAAAKNYKDVIVIVDLSDFTSCIQLINTNTVSLETRFDLATKAFKYTALYEEIISKYFLKKNPYRKKHQKNIFPNEFQLNFIKKQDLRYGENQHQKSSFYIEKEILKSGTISSSNQIQGKNLSYNNICDADIALECVKEFSKPTCVIVKHGNPCGVSESNSLIKAYFSAYNADPISAFGGIIAFNCLLDLDTAQEIVKKQFVEVIIAPEIDEMAVKILKRKKNIRLLICGKIEKNKKGLDFKRITNGLLIQEYDCDEINAKNFDFVTNRLPTEKELEDAIFSWKVAKFVKSNAIVYSLNKTTIGIGAGQTSRIDATKLANLKVKDRNHNNTTGATMASDAFFPFRDGIDNAALIGISCIIQPGGSIRDKEVIESANEHNISMIFTKKRHFKH.

One can recognise an MGS-like domain in the interval 1 to 148; that stretch reads MSLNNIIKNA…KNYKDVIVIV (148 aa).

The protein belongs to the PurH family.

It catalyses the reaction (6R)-10-formyltetrahydrofolate + 5-amino-1-(5-phospho-beta-D-ribosyl)imidazole-4-carboxamide = 5-formamido-1-(5-phospho-D-ribosyl)imidazole-4-carboxamide + (6S)-5,6,7,8-tetrahydrofolate. The enzyme catalyses IMP + H2O = 5-formamido-1-(5-phospho-D-ribosyl)imidazole-4-carboxamide. Its pathway is purine metabolism; IMP biosynthesis via de novo pathway; 5-formamido-1-(5-phospho-D-ribosyl)imidazole-4-carboxamide from 5-amino-1-(5-phospho-D-ribosyl)imidazole-4-carboxamide (10-formyl THF route): step 1/1. It participates in purine metabolism; IMP biosynthesis via de novo pathway; IMP from 5-formamido-1-(5-phospho-D-ribosyl)imidazole-4-carboxamide: step 1/1. The chain is Bifunctional purine biosynthesis protein PurH from Buchnera aphidicola subsp. Schizaphis graminum (strain Sg).